A 264-amino-acid polypeptide reads, in one-letter code: Small ribosomal subunit protein eS1 (264 aa).

Position 34 is an N6-acetyllysine; alternate (Lys34). Lys34 participates in a covalent cross-link: Glycyl lysine isopeptide (Lys-Gly) (interchain with G-Cter in SUMO2); alternate. At Lys56 the chain carries N6-acetyllysine. Position 155 is an ADP-ribosyltyrosine (Tyr155). The tract at residues 232–264 (HGEGGSSGKTTGDETGAKVERADGYEPPVQESV) is disordered. Position 237 is a phosphoserine (Ser237). Residues 242–255 (TGDETGAKVERADG) are compositionally biased toward basic and acidic residues. Lys249 carries the post-translational modification N6-acetyllysine; alternate. A Glycyl lysine isopeptide (Lys-Gly) (interchain with G-Cter in SUMO2); alternate cross-link involves residue Lys249. Tyr256 is modified (phosphotyrosine). Position 263 is a phosphoserine (Ser263).

Belongs to the eukaryotic ribosomal protein eS1 family. In terms of assembly, component of the small ribosomal subunit. Mature ribosomes consist of a small (40S) and a large (60S) subunit. The 40S subunit contains about 33 different proteins and 1 molecule of RNA (18S). The 60S subunit contains about 49 different proteins and 3 molecules of RNA (28S, 5.8S and 5S). Identified in a IGF2BP1-dependent mRNP granule complex containing untranslated mRNAs. Binds with high affinity to IPO4. Interacts with DDIT3. Part of the small subunit (SSU) processome, composed of more than 70 proteins and the RNA chaperone small nucleolar RNA (snoRNA) U3. The protein designated S3b has the same amino acid sequence as S3a except that it lacks the C-terminal 12 residues. It is probable that S3a is converted by proteolysis, either physiologically or fortuitously, to S3b. In terms of processing, ADP-ribosylated at Tyr-155 by PARP1 in presence of HPF1.

It localises to the cytoplasm. The protein localises to the nucleus. Its subcellular location is the nucleolus. Component of the small ribosomal subunit. The ribosome is a large ribonucleoprotein complex responsible for the synthesis of proteins in the cell. Part of the small subunit (SSU) processome, first precursor of the small eukaryotic ribosomal subunit. During the assembly of the SSU processome in the nucleolus, many ribosome biogenesis factors, an RNA chaperone and ribosomal proteins associate with the nascent pre-rRNA and work in concert to generate RNA folding, modifications, rearrangements and cleavage as well as targeted degradation of pre-ribosomal RNA by the RNA exosome. May play a role during erythropoiesis through regulation of transcription factor DDIT3. This chain is Small ribosomal subunit protein eS1 (Rps3a), found in Rattus norvegicus (Rat).